The primary structure comprises 197 residues: Rac-like GTP-binding protein ARAC11 (197 aa).

Position 13–20 (13–20 (GDGAVGKT)) interacts with GTP. Residues 35-43 (YVPTVFDNF) carry the Effector region motif. GTP contacts are provided by residues 60 to 64 (DTAGQ) and 118 to 121 (TKLD). The residue at position 194 (Cys-194) is a Cysteine methyl ester. Cys-194 carries the S-geranylgeranyl cysteine lipid modification. Residues 195–197 (SIL) constitute a propeptide, removed in mature form.

This sequence belongs to the small GTPase superfamily. Rho family. As to quaternary structure, part of a complex containing ROPGEF1 and PRK2. Interacts with UGT1, ICR1, ICR2, ICR3, ICR4 and ICR5. Interacts with PHIP1 when activated by GTP. In terms of tissue distribution, exclusively expressed in mature pollen and pollen tubes.

It localises to the cytoplasm. The protein resides in the membrane. The catalysed reaction is GTP + H2O = GDP + phosphate + H(+). May be involved in cell polarity control during the actin-dependent tip growth of pollen tubes. May regulate callose synthase 1 (CALS1) activity through the interaction with UGT1. In terms of biological role, inactive GDP-bound Rho GTPases reside in the cytosol, are found in a complex with Rho GDP-dissociation inhibitors (Rho GDIs), and are released from the GDI protein in order to translocate to membranes upon activation. This Arabidopsis thaliana (Mouse-ear cress) protein is Rac-like GTP-binding protein ARAC11.